Here is a 1373-residue protein sequence, read N- to C-terminus: Disease resistance protein RRS1 (1373 aa).

The region spanning 5-146 (EKDEEFVCIS…EIVRDVYETH (142 aa)) is the TIR domain. One can recognise an NB-ARC domain in the interval 170-421 (IGIRCVGIWG…LLEGCGFFPH (252 aa)). An ATP-binding site is contributed by 179–186 (GMPGIGKT). LRR repeat units follow at residues 498-522 (SEEI…AFKN), 535-553 (NPEV…HSLP), 554-575 (NELR…NFDP), 577-598 (HLVE…TKNL), 621-646 (AENL…RLLR), 665-688 (PPNI…TVKP), 742-766 (LPNM…SIQG), 768-793 (PRFL…SLEI), and 831-854 (PRNL…PLSL). The Nuclear localization signal signature appears at 988 to 1005 (RNFHCWAPGKVVPKVRKD). Residues 1204-1272 (IPAIDEGDLW…YLSEHNHPRP (69 aa)) constitute a DNA-binding region (WRKY). The tract at residues 1300–1323 (RVFQNKDEPNKPHLPSSSTPPGNA) is disordered.

In terms of assembly, interacts with PopP2, a R.solanacearum type III effector.

The protein resides in the nucleus. In terms of biological role, transcription factor. Interacts specifically with the W box (5'-(T)TGAC[CT]-3'), a frequently occurring elicitor-responsive cis-acting element. Also acts as a disease resistance protein involved in resistance to fungal and bacterial pathogens, including R.solanacearum, P.syringae pv. tomato and C.higginsianum. The sequence is that of Disease resistance protein RRS1 from Arabidopsis thaliana (Mouse-ear cress).